A 463-amino-acid chain; its full sequence is Vicilin (463 aa).

A signal peptide spans M1 to S27. A Cupin type-1 1 domain is found at P35–E194. The tract at residues L235–R257 is disordered. Over residues N238–E252 the composition is skewed to low complexity. One can recognise a Cupin type-1 2 domain in the interval F254–D426.

Belongs to the 7S seed storage protein family.

The protein localises to the vacuole. The protein resides in the aleurone grain. Its function is as follows. Seed storage protein. The sequence is that of Vicilin from Vicia faba (Broad bean).